Consider the following 281-residue polypeptide: 2-dehydro-3-deoxyphosphooctonate aldolase (281 aa).

It belongs to the KdsA family.

Its subcellular location is the cytoplasm. The enzyme catalyses D-arabinose 5-phosphate + phosphoenolpyruvate + H2O = 3-deoxy-alpha-D-manno-2-octulosonate-8-phosphate + phosphate. It participates in carbohydrate biosynthesis; 3-deoxy-D-manno-octulosonate biosynthesis; 3-deoxy-D-manno-octulosonate from D-ribulose 5-phosphate: step 2/3. Its pathway is bacterial outer membrane biogenesis; lipopolysaccharide biosynthesis. The sequence is that of 2-dehydro-3-deoxyphosphooctonate aldolase from Pseudomonas syringae pv. syringae (strain B728a).